The sequence spans 627 residues: Asparagine synthetase domain-containing protein 1 (627 aa).

The active-site For GATase activity is the Cys-2. In terms of domain architecture, Glutamine amidotransferase type-2 spans Cys-2–Asn-184. The region spanning Ala-308 to Lys-597 is the Asparagine synthetase domain. A disordered region spans residues Gln-373–Thr-404.

This chain is Asparagine synthetase domain-containing protein 1 (Asnsd1), found in Mus musculus (Mouse).